The chain runs to 62 residues: MATCSICGKRAVTGNQVSHSNIKTKRTWAPNLQRVKLLVNGTPRRAYVCTRCLRSGKVQRAI.

The protein belongs to the bacterial ribosomal protein bL28 family.

This Moorella thermoacetica (strain ATCC 39073 / JCM 9320) protein is Large ribosomal subunit protein bL28.